The primary structure comprises 187 residues: MKLERILPFSKTLIKQHITPESIVVDATCGNGNDTLFLAEQVPEGHVYGFDIQDLALENTRDKVKDFNHVSLIKDGHENIEHHINDAHKGHIDAAIFNLGYLPKGDKSIVTKPDTTIQAINSLLSLMSIEGIIVLVIYHGHSEGQIEKHALLDYLSTLDQKHAQVLQYQFLNQRNHAPFICAIEKIS.

Positions 31, 33, 51, 53, 77, and 78 each coordinate S-adenosyl-L-methionine.

It belongs to the methyltransferase superfamily. MnmM family. Homodimer.

The catalysed reaction is 5-aminomethyl-2-thiouridine(34) in tRNA + S-adenosyl-L-methionine = 5-methylaminomethyl-2-thiouridine(34) in tRNA + S-adenosyl-L-homocysteine + H(+). Its pathway is tRNA modification. Its function is as follows. Involved in the biosynthesis of 5-methylaminomethyl-2-thiouridine (mnm(5)s(2)U) at the wobble position (U34) in tRNA. Catalyzes the transfer of a methyl group from S-adenosyl-L-methionine to nm(5)s(2)U34 to form mnm(5)s(2)U34. This Staphylococcus aureus (strain NCTC 8325 / PS 47) protein is tRNA (mnm(5)s(2)U34)-methyltransferase.